A 198-amino-acid chain; its full sequence is Elongation factor Ts (198 aa).

Residues 81 to 84 (TDFV) are involved in Mg(2+) ion dislocation from EF-Tu.

It belongs to the EF-Ts family.

The protein localises to the cytoplasm. Functionally, associates with the EF-Tu.GDP complex and induces the exchange of GDP to GTP. It remains bound to the aminoacyl-tRNA.EF-Tu.GTP complex up to the GTP hydrolysis stage on the ribosome. This Herpetosiphon aurantiacus (strain ATCC 23779 / DSM 785 / 114-95) protein is Elongation factor Ts.